Consider the following 102-residue polypeptide: MNGQNIRIRLKAFDHRILDASTREIVSTAKRTGANVRGPIPLPTRIEKFTVNRSPHIDKKSREQFEMRTHKRLLDIVDPTPQTVDALMKLDLSAGVDVEIKL.

The protein belongs to the universal ribosomal protein uS10 family. In terms of assembly, part of the 30S ribosomal subunit.

In terms of biological role, involved in the binding of tRNA to the ribosomes. The chain is Small ribosomal subunit protein uS10 from Brucella abortus (strain S19).